A 264-amino-acid chain; its full sequence is Phosphoribosylaminoimidazole-succinocarboxamide synthase (264 aa).

This sequence belongs to the SAICAR synthetase family.

It carries out the reaction 5-amino-1-(5-phospho-D-ribosyl)imidazole-4-carboxylate + L-aspartate + ATP = (2S)-2-[5-amino-1-(5-phospho-beta-D-ribosyl)imidazole-4-carboxamido]succinate + ADP + phosphate + 2 H(+). Its pathway is purine metabolism; IMP biosynthesis via de novo pathway; 5-amino-1-(5-phospho-D-ribosyl)imidazole-4-carboxamide from 5-amino-1-(5-phospho-D-ribosyl)imidazole-4-carboxylate: step 1/2. The protein is Phosphoribosylaminoimidazole-succinocarboxamide synthase (purC) of Synechocystis sp. (strain ATCC 27184 / PCC 6803 / Kazusa).